The primary structure comprises 842 residues: Leucine--tRNA ligase (842 aa).

The short motif at 44 to 55 (PYPSANGLHVGH) is the 'HIGH' region element. The 'KMSKS' region signature appears at 619–623 (KMSKS). Lys622 is an ATP binding site.

This sequence belongs to the class-I aminoacyl-tRNA synthetase family.

It localises to the cytoplasm. The enzyme catalyses tRNA(Leu) + L-leucine + ATP = L-leucyl-tRNA(Leu) + AMP + diphosphate. The sequence is that of Leucine--tRNA ligase from Borrelia recurrentis (strain A1).